The primary structure comprises 274 residues: Orotidine 5'-phosphate decarboxylase (274 aa).

The Proton donor role is filled by K96.

This sequence belongs to the OMP decarboxylase family. Type 2 subfamily.

The catalysed reaction is orotidine 5'-phosphate + H(+) = UMP + CO2. It functions in the pathway pyrimidine metabolism; UMP biosynthesis via de novo pathway; UMP from orotate: step 2/2. This Bacteroides fragilis (strain ATCC 25285 / DSM 2151 / CCUG 4856 / JCM 11019 / LMG 10263 / NCTC 9343 / Onslow / VPI 2553 / EN-2) protein is Orotidine 5'-phosphate decarboxylase.